Here is a 301-residue protein sequence, read N- to C-terminus: MAQNLKDFAGRLPAGPRGMGTAMKLLLGAGAVAYAVKESVFTVEGGHRAIFFNRIGGVQQDTILAEGLHFRFPWFQYPIIYDIRARPRKISSPTGSKDLQMVNITLRVLSRPLASELPFMYQRLGLDYDERVLPSIVNEVLKSVVAKFNASQLITQRAQVSLLIRRELTERAKDFSIILDDVAITELSFSREYTAAVESKQVAQQEAQRAQFLVEKAKQDQKQKIVQAEGEAAAAKMIGDALSKNPGYLKLRRIRAAQSIAKTIASSQNRVYLNADSLVLNLQDDTFTRGSDSLVAKQTKK.

2 necessary for transcriptional repression regions span residues 19-49 (MGTA…GHRA) and 150-174 (ASQL…RAKD). Residues 191–237 (REYTAAVESKQVAQQEAQRAQFLVEKAKQDQKQKIVQAEGEAAAAKM) are a coiled coil.

This sequence belongs to the prohibitin family. The mitochondrial prohibitin complex consists of two subunits (PHB1 and PHB2), assembled into a membrane-associated ring-shaped supercomplex of approximately 1 mDa.

Its subcellular location is the mitochondrion inner membrane. The protein resides in the cytoplasm. It is found in the nucleus. It localises to the cell membrane. Functionally, protein with pleiotropic attributes mediated in a cell-compartment- and tissue-specific manner, which include the plasma membrane-associated cell signaling functions, mitochondrial chaperone, and transcriptional co-regulator of transcription factors and sex steroid hormones in the nucleus. Its function is as follows. In the mitochondria, together with PHB, forms large ring complexes (prohibitin complexes) in the inner mitochondrial membrane (IMM) and functions as a chaperone protein that stabilizes mitochondrial respiratory enzymes and maintains mitochondrial integrity in the IMM, which is required for mitochondrial morphogenesis, neuronal survival, and normal lifespan. In terms of biological role, in the nucleus, serves as transcriptional co-regulator. The polypeptide is Prohibitin-2 (phb2) (Xenopus tropicalis (Western clawed frog)).